The following is a 260-amino-acid chain: Tropinone reductase 2 (260 aa).

18 to 41 (SRGIGYGIVEELASLGASVYTCSR) contacts NADP(+). Serine 146 provides a ligand contact to substrate. Tyrosine 159 serves as the catalytic Proton acceptor. NADP(+) is bound at residue 192–196 (IATSL).

The protein belongs to the short-chain dehydrogenases/reductases (SDR) family. Homodimer.

It catalyses the reaction pseudotropine + NADP(+) = tropinone + NADPH + H(+). The protein operates within alkaloid biosynthesis; tropane alkaloid biosynthesis. Its function is as follows. Catalyzes the stereospecific reduction of tropinone to pseudotropine. In Datura stramonium (Jimsonweed), this protein is Tropinone reductase 2 (TR2).